Reading from the N-terminus, the 272-residue chain is GEM-like protein 5 (272 aa).

Residues 1-42 are disordered; sequence MTGSQEDQPKIIIDQEQPKTLETEHQPEPSSSSPDQKKWGTH. The span at 16–27 shows a compositional bias: basic and acidic residues; the sequence is EQPKTLETEHQP. Residues 143–221 form the GRAM domain; it reads SLFRQIFGTE…ANVATVNPVV (79 aa).

It belongs to the GEM family.

This chain is GEM-like protein 5, found in Arabidopsis thaliana (Mouse-ear cress).